Reading from the N-terminus, the 368-residue chain is Histidinol-phosphate aminotransferase (368 aa).

N6-(pyridoxal phosphate)lysine is present on Lys-223.

It belongs to the class-II pyridoxal-phosphate-dependent aminotransferase family. Histidinol-phosphate aminotransferase subfamily. As to quaternary structure, homodimer. It depends on pyridoxal 5'-phosphate as a cofactor.

It catalyses the reaction L-histidinol phosphate + 2-oxoglutarate = 3-(imidazol-4-yl)-2-oxopropyl phosphate + L-glutamate. It functions in the pathway amino-acid biosynthesis; L-histidine biosynthesis; L-histidine from 5-phospho-alpha-D-ribose 1-diphosphate: step 7/9. This Sinorhizobium fredii (strain NBRC 101917 / NGR234) protein is Histidinol-phosphate aminotransferase (hisC).